A 561-amino-acid chain; its full sequence is Arginine--tRNA ligase (561 aa).

Residues 128–138 carry the 'HIGH' region motif; sequence ANPTGPLHVGH.

This sequence belongs to the class-I aminoacyl-tRNA synthetase family. In terms of assembly, monomer.

Its subcellular location is the cytoplasm. It carries out the reaction tRNA(Arg) + L-arginine + ATP = L-arginyl-tRNA(Arg) + AMP + diphosphate. The sequence is that of Arginine--tRNA ligase from Leptothrix cholodnii (strain ATCC 51168 / LMG 8142 / SP-6) (Leptothrix discophora (strain SP-6)).